The sequence spans 452 residues: Protein disulfide-isomerase TMX3 (452 aa).

A signal peptide spans 1 to 26 (MAAAGLCFILAIVSSTSLLASVPVSA). The region spanning 27 to 128 (LVEDLDDSFK…KEDIVEFANR (102 aa)) is the Thioredoxin domain. The Lumenal segment spans residues 27 to 375 (LVEDLDDSFK…TVVSVFKSSP (349 aa)). Active-site nucleophile residues include Cys53 and Cys56. A disulfide bridge connects residues Cys53 and Cys56. 2 N-linked (GlcNAc...) asparagine glycosylation sites follow: Asn258 and Asn313. A helical membrane pass occupies residues 376–396 (LLGCFLFGLPLGVISIMCYGI). The Cytoplasmic segment spans residues 397–452 (CTADTEDGSEEMTRKDVIDQNASDEGSDEEEEKGREITDVSDEDQQEKDFMEKKID). A disordered region spans residues 405–452 (SEEMTRKDVIDQNASDEGSDEEEEKGREITDVSDEDQQEKDFMEKKID). Basic and acidic residues predominate over residues 443 to 452 (EKDFMEKKID). Positions 449 to 452 (KKID) match the Di-lysine motif motif.

The protein belongs to the protein disulfide isomerase family.

It localises to the endoplasmic reticulum membrane. It catalyses the reaction Catalyzes the rearrangement of -S-S- bonds in proteins.. Probable disulfide isomerase, which participates in the folding of proteins containing disulfide bonds. May act as a dithiol oxidase. Acts as a regulator of endoplasmic reticulum-mitochondria contact sites via its ability to regulate redox signals. The sequence is that of Protein disulfide-isomerase TMX3 (tmx3) from Xenopus laevis (African clawed frog).